The following is a 323-amino-acid chain: MPALPMNQEFDRERFRVDLRATAAAIGAPVTPRVTDTVLETFRDNFAQGATLWKTTSQPGDQLSYRFFSRLKMDTVGRAVDAGLLDGTHPTVPIVEDWSDLYGGTPVQSADFDAGRGMAKTWLYFGGLRPAEDILSVPALPAPVQARLKDFLGLGLAHVRFAAVDWRHRSANVYFRGQGPLDTAQFARVHALSGGTPPAADVVAEVLAYVPEDYCVAITLDLHTGAIDRVCFYALKVPKDARPRVPARIATFLEVAPSHDPEECNVIGWSFGRSGDYVKAERSYTGNMTEILSGWNCFFHGEEGRDHDLRALQDTGSITGGAR.

Substrate is bound by residues R160 and E281.

The protein belongs to the aromatic prenyltransferase family. As to quaternary structure, monomer.

It localises to the cytoplasm. It catalyses the reaction 3-(4-hydroxyphenyl)pyruvate + dimethylallyl diphosphate = 3-dimethylallyl-4-hydroxyphenylpyruvate + diphosphate. It functions in the pathway antibiotic biosynthesis; novobiocin biosynthesis. Its function is as follows. Magnesium-independent aromatic prenyltransferase that catalyzes the irreversible transfer of a dimethylallyl group to 4-hydroxyphenylpyruvate to produce the ring A structure in the novobiocin biosynthesis pathway. Novobiocin is an aminocoumarin family antibiotic that targets bacterial DNA gyrases. It is able to prenylate many different compounds, including the phenylpropanoids 4-coumarate and caffeate, the plant polyketide resveratrol, the (iso)flavonoid naringenin, apigenin, daidzein and genistein, and the dihydroxynaphthalenes 1,6-DHN and 2,7-DHN. This is 4-hydroxyphenylpyruvate 3-dimethylallyltransferase from Streptomyces niveus (Streptomyces spheroides).